A 317-amino-acid polypeptide reads, in one-letter code: L-lactate dehydrogenase 1 (317 aa).

Residues valine 17, aspartate 38, lysine 43, tyrosine 69, and 83-84 (GA) each bind NAD(+). Substrate contacts are provided by glutamine 86 and arginine 92. NAD(+)-binding positions include serine 105, 122–124 (ATN), and serine 147. 124–127 (NPVD) contributes to the substrate binding site. 152 to 155 (DSAR) is a binding site for substrate. The active-site Proton acceptor is the histidine 179. Tyrosine 223 is modified (phosphotyrosine). Position 232 (threonine 232) interacts with substrate.

It belongs to the LDH/MDH superfamily. LDH family. Homotetramer.

Its subcellular location is the cytoplasm. It catalyses the reaction (S)-lactate + NAD(+) = pyruvate + NADH + H(+). It functions in the pathway fermentation; pyruvate fermentation to lactate; (S)-lactate from pyruvate: step 1/1. In terms of biological role, catalyzes the conversion of lactate to pyruvate (Potential). Appears to be the primary factor that allows S.aureus growth during nitrosative stress in both aerobically and anaerobically cultured cells. In Staphylococcus aureus (strain bovine RF122 / ET3-1), this protein is L-lactate dehydrogenase 1.